Consider the following 409-residue polypeptide: Peptidase T (409 aa).

Zn(2+) is bound at residue His-78. The active site involves Asp-80. Asp-140 contacts Zn(2+). Glu-174 functions as the Proton acceptor in the catalytic mechanism. The Zn(2+) site is built by Glu-175, Asp-197, and His-379.

This sequence belongs to the peptidase M20B family. Zn(2+) is required as a cofactor.

The protein localises to the cytoplasm. It catalyses the reaction Release of the N-terminal residue from a tripeptide.. Its function is as follows. Cleaves the N-terminal amino acid of tripeptides. In Aliivibrio fischeri (strain ATCC 700601 / ES114) (Vibrio fischeri), this protein is Peptidase T.